We begin with the raw amino-acid sequence, 387 residues long: 3-ketoacyl-CoA thiolase (387 aa).

The Acyl-thioester intermediate role is filled by Cys91. Residues His343 and Cys373 each act as proton acceptor in the active site.

The protein belongs to the thiolase-like superfamily. Thiolase family. In terms of assembly, heterotetramer of two alpha chains (FadB) and two beta chains (FadA).

The protein localises to the cytoplasm. The enzyme catalyses an acyl-CoA + acetyl-CoA = a 3-oxoacyl-CoA + CoA. It functions in the pathway lipid metabolism; fatty acid beta-oxidation. In terms of biological role, catalyzes the final step of fatty acid oxidation in which acetyl-CoA is released and the CoA ester of a fatty acid two carbons shorter is formed. This is 3-ketoacyl-CoA thiolase from Escherichia fergusonii (strain ATCC 35469 / DSM 13698 / CCUG 18766 / IAM 14443 / JCM 21226 / LMG 7866 / NBRC 102419 / NCTC 12128 / CDC 0568-73).